The chain runs to 397 residues: 2,6-dihydroxypyridine 3-monooxygenase (397 aa).

Residues 14 to 16 (SIS), 35 to 36 (ER), V49, L120, D306, and 316 to 320 (AAGGA) each bind FAD.

Homodimer. Requires FAD as cofactor.

It carries out the reaction 2,6-dihydroxypyridine + NADH + O2 + H(+) = 2,3,6-trihydroxypyridine + NAD(+) + H2O. It functions in the pathway alkaloid degradation; nicotine degradation. Catalyzes the conversion of 2,6-dihydroxypyridine into 2,3,6-trihydroxypyridine in the nicotine degradation pathway. The chain is 2,6-dihydroxypyridine 3-monooxygenase (dhpH) from Paenarthrobacter nicotinovorans (Arthrobacter nicotinovorans).